Consider the following 188-residue polypeptide: Putative 3-methyladenine DNA glycosylase (188 aa).

The protein belongs to the DNA glycosylase MPG family.

The sequence is that of Putative 3-methyladenine DNA glycosylase from Ehrlichia ruminantium (strain Gardel).